Reading from the N-terminus, the 986-residue chain is Ephrin type-A receptor 4 (986 aa).

The first 19 residues, 1-19 (MAGVPVGALLPLLVGVCGA), serve as a signal peptide directing secretion. The Extracellular portion of the chain corresponds to 20-547 (VTGSRVYPAN…PIIGDGTNPT (528 aa)). Residues 30–209 (EVTLLDSRSV…FYKKCPLTVR (180 aa)) form the Eph LBD domain. Asparagine 235, asparagine 340, and asparagine 408 each carry an N-linked (GlcNAc...) asparagine glycan. Fibronectin type-III domains follow at residues 328–439 (PPSA…TNQA) and 440–537 (APSP…TVPS). The chain crosses the membrane as a helical span at residues 548–569 (VLLVSVAGSVVLVVILIAAFVI). At 570–986 (SRRRSKYSKA…QQMHGRMVPV (417 aa)) the chain is on the cytoplasmic side. Phosphotyrosine; by autocatalysis is present on residues tyrosine 596 and tyrosine 602. The region spanning 621–882 (IKIEKVIGVG…QIVNMLDKLI (262 aa)) is the Protein kinase domain. ATP contacts are provided by residues 627 to 635 (IGVGEFGEV) and lysine 653. Aspartate 746 serves as the catalytic Proton acceptor. Residues tyrosine 779 and tyrosine 928 each carry the phosphotyrosine; by autocatalysis modification. In terms of domain architecture, SAM spans 911–975 (SAVVSVSDWL…LSSVQAMRSQ (65 aa)). The short motif at 984 to 986 (VPV) is the PDZ-binding element.

It belongs to the protein kinase superfamily. Tyr protein kinase family. Ephrin receptor subfamily. Interacts with the src family kinase, p59-Fyn, through the major phosphorylation site at position Tyr-602. Interacts (via PDZ motif) with SIPA1L1 (via PDZ domain); controls neuronal morphology through regulation of the RAP1 (RAP1A or RAP1B) and RAP2 (RAP2A, RAP2B or RAP2C) GTPases. In terms of tissue distribution, expressed at high levels in brain, with expression also detected in the kidney, lung, muscle and thymus.

The protein resides in the cell membrane. It is found in the early endosome. The catalysed reaction is L-tyrosyl-[protein] + ATP = O-phospho-L-tyrosyl-[protein] + ADP + H(+). Its function is as follows. Receptor tyrosine kinase which binds membrane-bound ephrin family ligands residing on adjacent cells, leading to contact-dependent bidirectional signaling into neighboring cells. The signaling pathway downstream of the receptor is referred to as forward signaling while the signaling pathway downstream of the ephrin ligand is referred to as reverse signaling. Highly promiscuous, it has the unique property among Eph receptors to bind and to be physiologically activated by both GPI-anchored ephrin-A and transmembrane ephrin-B ligands including EFNA1 and EFNB3. Upon activation by ephrin ligands, modulates cell morphology and integrin-dependent cell adhesion through regulation of the Rac, Rap and Rho GTPases activity. Plays an important role in the development of the nervous system controlling different steps of axonal guidance including the establishment of the corticospinal projections. The sequence is that of Ephrin type-A receptor 4 (EPHA4) from Gallus gallus (Chicken).